A 391-amino-acid polypeptide reads, in one-letter code: MADEGSSTKDSESFSVLNWDQVSRLHEVLTEVVPIHGRGNFPTLEITLKDIVQTVRSRLEEAGIKVQDVRLNGSAAGHVLVKDNGLGCKDLDLIFHVALPTEAEFQLVRDVVLCSLLNFLPEGVNKLKISPVTLKEAYVQKLVKVCTDTDRWSLISLSNKNGRNVELKFVDSIRRQFEFSVDSFQIILDSLLFFYDCSSNPVSEHFHPTVVGESMYGDFEEAFDHLQNRLIATKNPEEIRGGGLLKYSNLLVRDFRPADQEEIKTLERYMCSRFFIDFPDILEQQRKLETYLQNHFADEERSKYDYLMILRRVVNESTVCLMGHERRQTLNLISLLALRVLAEQNIIPSATNVTCYYQPAPYVSDGNFNNYYIAHPPVTYSQPYPTWLPCN.

It belongs to the TENT family. In terms of assembly, interacts with BCCIP and PABPC1; the interaction has no effect on TENT5C poly(A) polymerase function. Interacts with PLK4; this interaction leads to the TENT5C recruitment into the centrosome.

Its subcellular location is the nucleus. It is found in the cytoplasm. The protein localises to the cytoskeleton. The protein resides in the microtubule organizing center. It localises to the centrosome. It catalyses the reaction RNA(n) + ATP = RNA(n)-3'-adenine ribonucleotide + diphosphate. Functionally, catalyzes the transfer of one adenosine molecule from an ATP to an mRNA poly(A) tail bearing a 3'-OH terminal group and enhances mRNA stability and gene expression. Can also elongate RNA oligos ending with uridine molecule, provided that the sequence is adenosine-rich. Mainly targets mRNAs encoding endoplasmic reticulum-targeted protein. The polypeptide is Terminal nucleotidyltransferase 5C (Rattus norvegicus (Rat)).